The primary structure comprises 462 residues: GTPase Der (462 aa).

EngA-type G domains follow at residues 2–164 (QKVI…EEKV) and 198–369 (IRVG…KNYT). GTP contacts are provided by residues 8-15 (GKPNVGKS), 55-59 (DSGGL), 116-119 (NKID), 204-211 (GRVNVGKS), 251-255 (DTAGI), and 315-318 (NKWD). One can recognise a KH-like domain in the interval 370–454 (QKIQTSKLNE…PIVLIPKKRG (85 aa)).

The protein belongs to the TRAFAC class TrmE-Era-EngA-EngB-Septin-like GTPase superfamily. EngA (Der) GTPase family. As to quaternary structure, associates with the 50S ribosomal subunit.

GTPase that plays an essential role in the late steps of ribosome biogenesis. The polypeptide is GTPase Der (Campylobacter concisus (strain 13826)).